The sequence spans 561 residues: Oxygen-dependent choline dehydrogenase (561 aa).

Position 7 to 36 (7 to 36 (DYIIVGAGSAGNVLASRLTEDADVTVLLLE)) interacts with FAD. H474 functions as the Proton acceptor in the catalytic mechanism.

It belongs to the GMC oxidoreductase family. The cofactor is FAD.

It catalyses the reaction choline + A = betaine aldehyde + AH2. It carries out the reaction betaine aldehyde + NAD(+) + H2O = glycine betaine + NADH + 2 H(+). Its pathway is amine and polyamine biosynthesis; betaine biosynthesis via choline pathway; betaine aldehyde from choline (cytochrome c reductase route): step 1/1. Involved in the biosynthesis of the osmoprotectant glycine betaine. Catalyzes the oxidation of choline to betaine aldehyde and betaine aldehyde to glycine betaine at the same rate. The polypeptide is Oxygen-dependent choline dehydrogenase (Paraburkholderia phytofirmans (strain DSM 17436 / LMG 22146 / PsJN) (Burkholderia phytofirmans)).